The following is a 2643-amino-acid chain: Ankyrin repeat domain-containing protein 11 (2643 aa).

2 disordered regions span residues M1–V90 and S128–T170. Basic and acidic residues-rich tracts occupy residues M21–R54 and E69–V90. The span at S128 to S155 shows a compositional bias: polar residues. Over residues K156 to T170 the composition is skewed to basic and acidic residues. ANK repeat units follow at residues R167–V196, A200–T229, D233–Q262, and K266–S292. S276 carries the phosphoserine modification. Residues Y289–H365 form a disordered region. Positions S295 to A305 are enriched in acidic residues. Positions A309–D320 are enriched in polar residues. Basic and acidic residues-rich tracts occupy residues E322–E335 and D356–H365. Phosphoserine is present on S408. T410 is modified (phosphothreonine). S411 is subject to Phosphoserine. Disordered regions lie at residues G423–G504, S517–S651, and D727–K805. Over residues K438–K451 the composition is skewed to basic and acidic residues. Over residues N452–T462 the composition is skewed to basic residues. Residues K463–K475 show a composition bias toward basic and acidic residues. A compositionally biased stretch (acidic residues) spans E484–D494. The segment covering S517–S528 has biased composition (low complexity). Basic and acidic residues predominate over residues G537–N550. Over residues P557–T574 the composition is skewed to polar residues. Low complexity predominate over residues S575–S588. Basic residues-rich tracts occupy residues P591–G602 and V633–E646. S838 carries the phosphoserine modification. Basic and acidic residues-rich tracts occupy residues K918–K931 and S938–E962. 3 disordered regions span residues K918 to E962, S977 to D1037, and E1051 to L1074. Phosphoserine is present on S1070. T1111 carries the post-translational modification Phosphothreonine. Position 1114 is a phosphoserine (S1114). 2 disordered regions span residues S1114 to S1388 and L1420 to C1711. 8 stretches are compositionally biased toward basic and acidic residues: residues D1133 to S1297, A1326 to K1343, K1355 to S1388, L1420 to K1444, R1464 to S1535, V1546 to G1564, L1577 to R1587, and M1595 to E1640. S1676 carries the phosphoserine modification. Residues R1678 to S1695 are compositionally biased toward polar residues. S1777 and S1832 each carry phosphoserine. Phosphotyrosine is present on residues Y1835 and Y1836. Residues S1837 and S1844 each carry the phosphoserine modification. Disordered regions lie at residues P1863 to L1900, S1981 to D2027, and H2111 to Q2386. Phosphoserine is present on residues S1981 and S2139. 2 stretches are compositionally biased toward pro residues: residues P2150–P2160 and E2175–E2184. Over residues S2273–E2284 the composition is skewed to low complexity. Residues P2297–P2315 are compositionally biased toward basic and acidic residues. The important for protein degradation stretch occupies residues A2349 to A2643. The segment covering R2371–Q2386 has biased composition (low complexity).

As to quaternary structure, interacts with the PAS region of the p160 coactivators. Subject to proteasomal degradation which is probably essential to regulate its activity.

The protein localises to the nucleus. Functionally, chromatin regulator which modulates histone acetylation and gene expression in neural precursor cells. May recruit histone deacetylases (HDACs) to the p160 coactivators/nuclear receptor complex to inhibit ligand-dependent transactivation. Has a role in proliferation and development of cortical neural precursors. May also regulate bone homeostasis. The sequence is that of Ankyrin repeat domain-containing protein 11 from Mus musculus (Mouse).